Reading from the N-terminus, the 89-residue chain is Small ribosomal subunit protein bS20 (89 aa).

Disordered stretches follow at residues 1–25 (MANI…ASMK) and 69–89 (KNAA…IQAS). The span at 7 to 20 (AIKRAKTSEKRRAH) shows a compositional bias: basic residues.

It belongs to the bacterial ribosomal protein bS20 family.

Functionally, binds directly to 16S ribosomal RNA. This is Small ribosomal subunit protein bS20 from Geobacillus kaustophilus (strain HTA426).